A 552-amino-acid polypeptide reads, in one-letter code: Putative transport protein APJL_0985 (552 aa).

5 helical membrane passes run 4-24, 29-49, 65-85, 95-115, and 161-181; these read IAIIVSLLSLVAVLGLWIGHI, VGLGIGGVLFGGIIISHCTHL, FGLILFVYSIGIQVGPGFFAS, GFAVMIVGLSGILVALIHKLF, and IAYPFGIIGILLSMWLIRIIF. RCK C-terminal domains lie at 190 to 275 and 277 to 360; these read QEFD…ILGE and ADVS…IIGD. 6 helical membrane-spanning segments follow: residues 370–390, 403–425, 438–458, 463–483, 492–512, and 529–549; these read MLPIFLGIGLGVLLGSLPLYL, GGPLVVALILARIGSIGKLYWFM, IVLFLSVVGLKAGANFLDTLL, LAWMGYGAIITFIPLIVTGFV, YLSLCGLLSGAMTDPPALAFA, and VYPLVMFLRIILPQLLAILLW.

This sequence belongs to the AAE transporter (TC 2.A.81) family. YidE subfamily.

It localises to the cell membrane. This chain is Putative transport protein APJL_0985, found in Actinobacillus pleuropneumoniae serotype 3 (strain JL03).